Here is a 387-residue protein sequence, read N- to C-terminus: Major outer membrane protein P.IA (387 aa).

An N-terminal signal peptide occupies residues 1 to 19; the sequence is MRKKLTALVLSALPLAAVA.

The protein belongs to the Gram-negative porin family. In terms of assembly, homotrimer.

The protein resides in the cell outer membrane. Serves as a slightly cation selective porin. Major antigen on the gonococcal cell surface and it may have pathogenic properties in addition to its porin activity. The polypeptide is Major outer membrane protein P.IA (porA) (Neisseria meningitidis serogroup C).